The primary structure comprises 838 residues: Axin-2 (838 aa).

The disordered stretch occupies residues 1 to 75 (MSSAVLVTLL…EGRASPDSPL (75 aa)). Residues 21–30 (APRPPVPGEE) carry the Tankyrase-binding motif motif. The span at 42–55 (KVQSTKPMPVSSNA) shows a compositional bias: polar residues. Residues 56–69 (RRNEDGLGEPEGRA) show a composition bias toward basic and acidic residues. Positions 81 to 200 (SLHSLLGDQD…LTSDIYLEYV (120 aa)) constitute an RGS domain. 5 disordered regions span residues 300–333 (SELS…KKQL), 398–435 (IRED…EEDP), 450–483 (PGCQ…LLPT), 568–682 (GSRG…AMPP), and 712–744 (VASQ…DHKE). Positions 303–318 (SSDALTDDSMSMTDSS) are enriched in low complexity. The segment at 327–413 (MGSKKQLQRE…KEGSEQALSS (87 aa)) is interaction with GSK3B. Positions 413–476 (SRDGAPVQHP…PDHHHHHHQQ (64 aa)) are interaction with beta-catenin. The span at 727–737 (AGPTSFSNPSL) shows a compositional bias: polar residues. One can recognise a DIX domain in the interval 756-838 (ASELIVTYFF…RILGKVERID (83 aa)).

Interacts with SMAD7 and RNF111. Interacts with ANKRD6. Interacts with glycogen synthase kinase-3 beta (GSK3B) and beta-catenin. The interaction between axin and beta-catenin occurs via the armadillo repeats contained in beta-catenin. Interacts with SIAH1. Interacts with SIAH2. ADP-ribosylated by tankyrase TNKS and TNKS2. Poly-ADP-ribosylated protein is recognized by RNF146, followed by ubiquitination and subsequent activation of the Wnt signaling pathway. In terms of processing, ubiquitinated by RNF146 when poly-ADP-ribosylated, leading to its degradation and subsequent activation of the Wnt signaling pathway. Deubiquitinated by USP34, deubiquitinated downstream of beta-catenin stabilization step: deubiquitination is important Wnt signaling to positively regulate beta-catenin (CTNBB1)-mediated transcription. Post-translationally, probably phosphorylated by GSK3B and dephosphorylated by PP2A. As to expression, expressed in lung and thymus.

The protein localises to the cytoplasm. Inhibitor of the Wnt signaling pathway. Down-regulates beta-catenin. Probably facilitate the phosphorylation of beta-catenin and APC by GSK3B. The sequence is that of Axin-2 (Axin2) from Rattus norvegicus (Rat).